Reading from the N-terminus, the 485-residue chain is Glutamyl-tRNA(Gln) amidotransferase subunit A (485 aa).

Residues K75 and S150 each act as charge relay system in the active site. S174 functions as the Acyl-ester intermediate in the catalytic mechanism.

It belongs to the amidase family. GatA subfamily. In terms of assembly, heterotrimer of A, B and C subunits.

It catalyses the reaction L-glutamyl-tRNA(Gln) + L-glutamine + ATP + H2O = L-glutaminyl-tRNA(Gln) + L-glutamate + ADP + phosphate + H(+). In terms of biological role, allows the formation of correctly charged Gln-tRNA(Gln) through the transamidation of misacylated Glu-tRNA(Gln) in organisms which lack glutaminyl-tRNA synthetase. The reaction takes place in the presence of glutamine and ATP through an activated gamma-phospho-Glu-tRNA(Gln). This chain is Glutamyl-tRNA(Gln) amidotransferase subunit A, found in Trichodesmium erythraeum (strain IMS101).